Here is a 418-residue protein sequence, read N- to C-terminus: Sialidase-3 (418 aa).

The FRIP motif signature appears at 24–27 (YRIP). 2 residues coordinate substrate: Arg25 and Arg45. The active-site Proton acceptor is Asp50. A BNR 1 repeat occupies 129-140 (LCSEDAGCSWGE). Substrate-binding residues include Tyr179 and Tyr181. A BNR 2 repeat occupies 203–214 (SDDFGVTWHHGK). Glu223 and Arg243 together coordinate substrate. The BNR 3 repeat unit spans residues 254–265 (STDSGGCFQKPT). Ser312 is subject to Phosphoserine. Arg339 lines the substrate pocket. Tyr369 (nucleophile) is an active-site residue. The active site involves Glu386.

This sequence belongs to the glycosyl hydrolase 33 family. Interacts with CAV1; this interaction enhances NEU3 sialidase activity within caveola. Interacts with EGFR; this interaction mediates desialylation of EGFR and enhances downstream signaling. Post-translationally, palmitoylated; may regulate intracellular trafficking and anchorage to plasma membrane and endomembranes. In terms of tissue distribution, expressed in heart, brain and cerebral cortex.

The protein resides in the cell membrane. Its subcellular location is the membrane. The protein localises to the caveola. It localises to the early endosome membrane. It is found in the recycling endosome membrane. The protein resides in the lysosome membrane. The enzyme catalyses Hydrolysis of alpha-(2-&gt;3)-, alpha-(2-&gt;6)-, alpha-(2-&gt;8)- glycosidic linkages of terminal sialic acid residues in oligosaccharides, glycoproteins, glycolipids, colominic acid and synthetic substrates.. It carries out the reaction a ganglioside GD1a + H2O = a ganglioside GM1 + N-acetylneuraminate. It catalyses the reaction a ganglioside GD1a (d18:1(4E)) + H2O = a ganglioside GM1 (d18:1(4E)) + N-acetylneuraminate. The catalysed reaction is a ganglioside GD1b + H2O = a ganglioside GM1 + N-acetylneuraminate. The enzyme catalyses a ganglioside GD1b (d18:1(4E)) + H2O = a ganglioside GM1 (d18:1(4E)) + N-acetylneuraminate. It carries out the reaction a ganglioside GD3 + H2O = a ganglioside GM3 + N-acetylneuraminate. It catalyses the reaction a ganglioside GD3 (d18:1(4E)) + H2O = a ganglioside GM3 (d18:1(4E)) + N-acetylneuraminate. The catalysed reaction is a ganglioside GM3 + H2O = a beta-D-galactosyl-(1-&gt;4)-beta-D-glucosyl-(1&lt;-&gt;1)-ceramide + N-acetylneuraminate. The enzyme catalyses a ganglioside GM1 + H2O = a ganglioside GA1 + N-acetylneuraminate. It carries out the reaction a ganglioside GM1 (d18:1(4E)) + H2O = a ganglioside GA1 (d18:1(4E)) + N-acetylneuraminate. It catalyses the reaction a ganglioside GM2 (d18:1(4E)) + H2O = a ganglioside GA2 (d18:1(4E)) + N-acetylneuraminate. The catalysed reaction is a ganglioside GM3 (d18:1(4E)) + H2O = a beta-D-Gal-(1-&gt;4)-beta-D-Glc-(1&lt;-&gt;1)-Cer(d18:1(4E)) + N-acetylneuraminate. The enzyme catalyses a ganglioside GT1b + H2O = a ganglioside GD1b + N-acetylneuraminate. Its function is as follows. Exo-alpha-sialidase that catalyzes the hydrolytic cleavage of the terminal sialic acid (N-acetylneuraminic acid, Neu5Ac) of a glycan moiety in the catabolism of glycolipids, glycoproteins and oligosacharides. Displays high catalytic efficiency for gangliosides including alpha-(2-&gt;3)-sialylated GD1a and GM3 and alpha-(2-&gt;8)-sialylated GD3. Plays a role in the regulation of transmembrane signaling through the modulation of ganglioside content of the lipid bilayer and by direct interaction with signaling receptors, such as EGFR. Desialylates EGFR and activates downstream signaling in proliferating cells. Contributes to clathrin-mediated endocytosis by regulating sorting of endocytosed receptors to early and recycling endosomes. The chain is Sialidase-3 (Neu3) from Mus musculus (Mouse).